The chain runs to 67 residues: Conotoxin AbVIM (67 aa).

A signal peptide spans 1 to 17 (VLIIAVLFLTACQLIAT). The propeptide occupies 18-40 (ASYARSERKHPDLRLSSRNSKLS). 3 disulfides stabilise this stretch: Cys43–Cys57, Cys50–Cys61, and Cys56–Cys66.

Belongs to the conotoxin O1 superfamily. In terms of tissue distribution, expressed by the venom duct.

The protein localises to the secreted. This Conus abbreviatus (Abbreviated cone) protein is Conotoxin AbVIM.